Consider the following 2562-residue polypeptide: Zinc finger homeobox protein 2 (2562 aa).

The segment covering 1–13 has biased composition (polar residues); the sequence is MATLNSASPSGTV. Disordered stretches follow at residues 1–88 and 337–410; these read MATL…PPKD and PSPP…DPPP. Basic and acidic residues predominate over residues 56–73; the sequence is GGERLESGSDLDPPKEIG. C2H2-type zinc fingers lie at residues 446-469 and 501-525; these read LKCP…REKH and YRCD…SDKH. 3 disordered regions span residues 530-559, 603-651, and 669-705; these read QGFQ…EPKT, PPGL…PDKP, and RKFP…PSPD. Positions 609-622 are enriched in pro residues; that stretch reads PGPPPPPGAAPTNP. Over residues 690-704 the composition is skewed to polar residues; that stretch reads LLGSSSDGLPTSPSP. 3 C2H2-type zinc fingers span residues 752 to 776, 815 to 839, and 864 to 888; these read HRCK…TDKH, LRCN…GSAH, and YHCL…TPAH. Positions 923-966 are disordered; it reads RLQTPGKASDTPLAQPPTSEKDAQNKTEQQASEVTEDRSGPPRD. The C2H2-type 6 zinc-finger motif lies at 1003 to 1026; it reads YRCPLCQEQLVGRPALHFHLSHLH. 2 disordered regions span residues 1058–1126 and 1140–1166; these read NPVE…PAPR and MSEE…HPLT. Composition is skewed to pro residues over residues 1091-1101 and 1114-1124; these read SPDPPLEPPLA and DQPPSPAPSPA. 2 C2H2-type zinc fingers span residues 1185-1211 and 1242-1266; these read YKCT…SHLH and FKCT…SVLH. Residues 1278 to 1305 are compositionally biased toward basic and acidic residues; the sequence is RAEGAERGQEEFKEGETEGEAGTEKKGP. Residues 1278–1313 are disordered; that stretch reads RAEGAERGQEEFKEGETEGEAGTEKKGPDPGGFMSG. Residues 1474–1497 form a C2H2-type 9 zinc finger; that stretch reads LACGACGKLFSNMLILKTHEEHVH. Residues 1520 to 1584 form a disordered region; sequence LYPPPVEPPK…EGSRGSLPPA (65 aa). Residues 1521–1531 show a composition bias toward pro residues; that stretch reads YPPPVEPPKPP. The homeobox 1 DNA-binding region spans 1589–1648; sequence RRFSRTKFTEFQTQALQSFFETSAYPKDGEVERLASLLGLASRVVVVWFQNARQKARKNA. The C2H2-type 10; degenerate zinc-finger motif lies at 1664 to 1687; sequence SGCRRCHATFACVFELVRHLKKCY. The disordered stretch occupies residues 1689–1760; the sequence is DQPPEEEEEA…EGKAPPSPPV (72 aa). Residues 1690-1713 show a composition bias toward acidic residues; sequence QPPEEEEEAERGEEEEEVEEEEAE. The segment covering 1743–1752 has biased composition (basic and acidic residues); sequence TRPESKESEG. Residues 1761–1783 form a C2H2-type 11 zinc finger; the sequence is YACDQCAASFPSQDLLTTHHRLH. Disordered stretches follow at residues 1814–1853, 1907–1934, 1971–2057, 2114–2136, 2186–2210, 2263–2313, and 2391–2429; these read SGTS…KDKR, RKGQ…PAPF, PLPF…DSMG, KKAK…TSAA, PAPE…PLGA, QTAG…PNSS, and LQQP…LTGS. Positions 1851-1910 form a DNA-binding region, homeobox 2; the sequence is DKRLRTTILPEQLEILYRWYMQDSNPTRKMLDCISEEVGLKKRVVQVWFQNTRARERKGQ. Residues 1985 to 1996 are compositionally biased toward pro residues; the sequence is TPEPPPPLPPPA. Low complexity predominate over residues 2008-2037; it reads KASPESEACSPSAGDLSDSSASSLAEPESP. Residues 2038–2051 are compositionally biased toward gly residues; that stretch reads GAGGTSGGPGGGTG. Positions 2058–2117 form a DNA-binding region, homeobox 3; it reads QRRYRTQMSSLQLKIMKACYEAYRTPTMQECEVLGEEIGLPKRVIQVWFQNARAKEKKAK. Positions 2188–2200 are enriched in pro residues; the sequence is PETPLAPKGPPAT. A compositionally biased stretch (polar residues) spans 2275–2286; that stretch reads PVSNQTNSSTDP. Residues 2295–2305 show a composition bias toward basic and acidic residues; it reads SGDKVSGERKP. The segment covering 2395–2411 has biased composition (pro residues); it reads PQAPEPTATAPPKPPEL. The C2H2-type 12; degenerate zinc-finger motif lies at 2441–2461; it reads YLCRQCKMAFDGEAPATAHQR. A C2H2-type 13 zinc finger spans residues 2485–2509; the sequence is YHCLACEVLLSGREALASHLRSSAH. Disordered regions lie at residues 2506 to 2525 and 2540 to 2562; these read SSAH…ITVT and EEAR…LLAL. Low complexity predominate over residues 2553-2562; sequence TTTTSTLLAL.

As to expression, expressed in brain (at protein level). Expressed at the highest levels in the pyramidal cell layer of the hippocampus, the suprachiasmatic nucleus, laterodorsal thalamic nucleus, lateral geniculate nucleus, substantia nigra pars compacta, and magnocellular part of the red nucleus (at protein level). Highly expressed in dorsal root ganglia. Expressed at lower levels in kidney, stomach, liver, heart and testis.

Its subcellular location is the nucleus. Its function is as follows. Transcriptional regulator that is critical for the regulation of pain perception and processing of noxious stimuli. The protein is Zinc finger homeobox protein 2 of Mus musculus (Mouse).